A 632-amino-acid chain; its full sequence is Nucleoside triphosphatase I (632 aa).

Residues 42-204 form the Helicase ATP-binding domain; that stretch reads FLGLDKMHSL…VMLVNLLRPK (163 aa). Position 55–62 (55–62) interacts with ATP; that stretch reads HETGVGKT. A DEXH box motif is present at residues 141-144; that stretch reads DECH. The Helicase C-terminal domain occupies 367-532; it reads KFTDVCLRIL…EFTQLFKVFK (166 aa). Positions 457 to 524 are binding to the cap-specific mRNA (nucleoside-2'-O-)-methyltransferase; the sequence is DIFILDMTWN…DIIRTKSKEF (68 aa).

It belongs to the helicase family. NPH I subfamily. Monomer. Interacts (via C-terminus) with RAP94 (via N-terminus). Interacts with the cap-specific mRNA (nucleoside-2'-O-)-methyltransferase.

The protein localises to the virion. It carries out the reaction a ribonucleoside 5'-triphosphate + H2O = a ribonucleoside 5'-diphosphate + phosphate + H(+). Functionally, DNA-dependent ATPase required for providing the needed energy to achieve the termination of early transcripts. Acts in concert with the RAP94 subunit of the virion RNA polymerase and the capping enzyme/VTF to catalyze release of UUUUUNU-containing nascent RNA from the elongation complex. NPH-I must bind ssDNA in order to exhibit ATPase activity. In Myxoma virus (strain Lausanne) (MYXV), this protein is Nucleoside triphosphatase I (NPH1).